Here is a 416-residue protein sequence, read N- to C-terminus: cAMP-dependent protein kinase type II-beta regulatory subunit (416 aa).

A dimerization and phosphorylation region spans residues serine 2–leucine 151. The interval histidine 53–glycine 97 is disordered. Threonine 69 is subject to Phosphothreonine. Phosphoserine occurs at positions 83, 85, and 112. 3',5'-cyclic AMP is bound by residues leucine 152–proline 273, glutamate 221, arginine 230, phenylalanine 274–alanine 416, glutamate 350, and arginine 359.

This sequence belongs to the cAMP-dependent kinase regulatory chain family. The inactive form of the enzyme is composed of two regulatory chains and two catalytic chains. Activation by cAMP produces two active catalytic monomers and a regulatory dimer that binds four cAMP molecules. Interacts with PRKACA and PRKACB. Interacts with the phosphorylated form of PJA2. Forms a complex composed of PRKAR2B, GSK3B and GSKIP through GSKIP interaction; facilitates PKA-induced phosphorylation and regulates GSK3B activity. Post-translationally, phosphorylated by the activated catalytic chain. In terms of tissue distribution, four types of regulatory chains are found: I-alpha, I-beta, II-alpha, and II-beta. Their expression varies among tissues and is in some cases constitutive and in others inducible. Brain. Present in a few pyramidal neurons and mostly in mossy fibers. Colocalizes with PJA2 in dentate granule cells and at postsynaptic sites of primary hippocampal neurons.

Its subcellular location is the cytoplasm. It is found in the cell membrane. Its function is as follows. Regulatory subunit of the cAMP-dependent protein kinases involved in cAMP signaling in cells. Type II regulatory chains mediate membrane association by binding to anchoring proteins, including the MAP2 kinase. This chain is cAMP-dependent protein kinase type II-beta regulatory subunit (Prkar2b), found in Rattus norvegicus (Rat).